A 192-amino-acid polypeptide reads, in one-letter code: E3 ubiquitin-protein ligase RNF185 (192 aa).

Residues 1–27 (MASKGPSASASPENSSAGGPSGSSNGA) show a composition bias toward low complexity. The interval 1–30 (MASKGPSASASPENSSAGGPSGSSNGAGES) is disordered. Topologically, residues 1–130 (MASKGPSASA…GGFQGFGFGD (130 aa)) are cytoplasmic. Residues 29–80 (ESGGQDSTFECNICLDTAKDAVISLCGHLFCWPCLHQWLETRPNRQVCPVCK) are required for ubiquitin ligase activity and protection against ER stress-induced cell death. Residues 39–80 (CNICLDTAKDAVISLCGHLFCWPCLHQWLETRPNRQVCPVCK) form an RING-type zinc finger. Positions 90 to 123 (PLYGRGSTGQQDPREKTPPRPQGQRPEPENRGGF) are disordered. A helical transmembrane segment spans residues 131–151 (GGFQMSFGIGAFPFGIFATAF). The Mitochondrial intermembrane segment spans residues 152–171 (NINDGRPPPAVPGTPQYVDE). The chain crosses the membrane as a helical span at residues 172–192 (QFLSRLFLFVALVIMFWLLIA).

In terms of assembly, interacts with ATG5 and BNIP1. Ubiquitously expressed.

Its subcellular location is the mitochondrion outer membrane. It localises to the endoplasmic reticulum membrane. It carries out the reaction S-ubiquitinyl-[E2 ubiquitin-conjugating enzyme]-L-cysteine + [acceptor protein]-L-lysine = [E2 ubiquitin-conjugating enzyme]-L-cysteine + N(6)-ubiquitinyl-[acceptor protein]-L-lysine.. Its pathway is protein modification; protein ubiquitination. In terms of biological role, E3 ubiquitin-protein ligase that regulates selective mitochondrial autophagy by mediating 'Lys-63'-linked polyubiquitination of BNIP1. Acts in the endoplasmic reticulum (ER)-associated degradation (ERAD) pathway, which targets misfolded proteins that accumulate in the endoplasmic reticulum (ER) for ubiquitination and subsequent proteasome-mediated degradation. Protects cells from ER stress-induced apoptosis. Responsible for the cotranslational ubiquitination and degradation of CFTR in the ERAD pathway. Also acts as a regulator of the innate antiviral response by catalyzing 'Lys-27'-linked polyubiquitination of CGAS at 'Lys-173' and 'Lys-384', thereby promoting CGAS cyclic GMP-AMP synthase activity. Preferentially associates with the E2 enzymes UBE2J1 and UBE2J2. This is E3 ubiquitin-protein ligase RNF185 from Homo sapiens (Human).